The primary structure comprises 487 residues: Iron-sulfur cluster assembly SufBD family protein ycf24 (487 aa).

It belongs to the iron-sulfur cluster assembly SufBD family.

It localises to the plastid. It is found in the chloroplast. This chain is Iron-sulfur cluster assembly SufBD family protein ycf24 (ycf24), found in Porphyra purpurea (Red seaweed).